The primary structure comprises 196 residues: Adenine phosphoribosyltransferase (196 aa).

The protein belongs to the purine/pyrimidine phosphoribosyltransferase family. Homodimer.

Its subcellular location is the cytoplasm. It carries out the reaction AMP + diphosphate = 5-phospho-alpha-D-ribose 1-diphosphate + adenine. It functions in the pathway purine metabolism; AMP biosynthesis via salvage pathway; AMP from adenine: step 1/1. In terms of biological role, catalyzes a salvage reaction resulting in the formation of AMP, that is energically less costly than de novo synthesis. The protein is Adenine phosphoribosyltransferase of Methylibium petroleiphilum (strain ATCC BAA-1232 / LMG 22953 / PM1).